Here is a 457-residue protein sequence, read N- to C-terminus: L-asparaginase-like protein GA18140 (457 aa).

The signal sequence occupies residues 1–20; sequence MRYLCRAQLLSLLLLPLLKA. Cystine bridges form between C72-C78, C172-C188, and C327-C354.

Belongs to the Ntn-hydrolase family.

The chain is L-asparaginase-like protein GA18140 from Drosophila pseudoobscura pseudoobscura (Fruit fly).